The sequence spans 160 residues: Small ribosomal subunit protein uS7 (160 aa).

It belongs to the universal ribosomal protein uS7 family. In terms of assembly, part of the 30S ribosomal subunit. Contacts proteins S9 and S11.

In terms of biological role, one of the primary rRNA binding proteins, it binds directly to 16S rRNA where it nucleates assembly of the head domain of the 30S subunit. Is located at the subunit interface close to the decoding center, probably blocks exit of the E-site tRNA. This is Small ribosomal subunit protein uS7 from Rickettsia rickettsii (strain Iowa).